Reading from the N-terminus, the 581-residue chain is uncharacterized protein (581 aa).

The residue at position 28 (Ser-28) is a Phosphoserine. 11 helical membrane passes run 61-81 (LVLICLVSLVTGAIANDAGSA), 100-120 (AGVLFICVGYFTYLAMPATFL), 125-145 (CVYLVCLLFGMLGSMWFALVK), 187-207 (IYILSTSVGTYLGPLAAGYIA), 214-234 (WIGWWGLIISGITFVLFLFTF), 340-360 (IFLFPAVLYSGLQWGAQDAWL), 382-402 (AVAIMNVPCIIGATIGCIYGG), 426-446 (LWLMILPCIINPIGLFMFGIG), 458-478 (VGLGFIGFGWGCAGDISMAYL), 486-506 (VLEAMVGVSVINNTFGYVFTF), and 522-542 (ISIGVLCFIFIATSFPMILCG).

The protein belongs to the major facilitator superfamily.

It localises to the cytoplasm. The protein localises to the cell cortex. It is found in the membrane. This is an uncharacterized protein from Schizosaccharomyces pombe (strain 972 / ATCC 24843) (Fission yeast).